Here is a 213-residue protein sequence, read N- to C-terminus: Large ribosomal subunit protein uL23 (213 aa).

Residues 1–117 (MNHNEIIKYP…KSTSELKLEE (117 aa)) form a large ribosomal subunit protein uL23 region. The interval 118-213 (KIAAKIAAKE…TTKKTTTKKV (96 aa)) is unknown.

It belongs to the universal ribosomal protein uL23 family. Part of the 50S ribosomal subunit. Contacts protein L29, and trigger factor when it is bound to the ribosome.

Functionally, one of the early assembly proteins it binds 23S rRNA. One of the proteins that surrounds the polypeptide exit tunnel on the outside of the ribosome. Forms the main docking site for trigger factor binding to the ribosome. The chain is Large ribosomal subunit protein uL23 from Mycoplasma mobile (strain ATCC 43663 / 163K / NCTC 11711) (Mesomycoplasma mobile).